Reading from the N-terminus, the 478-residue chain is Proline--tRNA ligase (478 aa).

The protein belongs to the class-II aminoacyl-tRNA synthetase family. ProS type 3 subfamily. Homodimer.

Its subcellular location is the cytoplasm. The catalysed reaction is tRNA(Pro) + L-proline + ATP = L-prolyl-tRNA(Pro) + AMP + diphosphate. In terms of biological role, catalyzes the attachment of proline to tRNA(Pro) in a two-step reaction: proline is first activated by ATP to form Pro-AMP and then transferred to the acceptor end of tRNA(Pro). This chain is Proline--tRNA ligase, found in Ignicoccus hospitalis (strain KIN4/I / DSM 18386 / JCM 14125).